The sequence spans 281 residues: Mad-like protein 1 (281 aa).

A compositionally biased stretch (low complexity) spans 71–80 (SCASNASTSS). The tract at residues 71–105 (SCASNASTSSQPYCSSPPARKSSKHSRTAHNELEK) is disordered. Residues 95–108 (HSRTAHNELEKTRR) are basic motif. The 53-residue stretch at 95-147 (HSRTAHNELEKTRRANLRGCLETLKMLVPCVSDATRNTTLALLTRARDHIIEL) folds into the bHLH domain. The helix-loop-helix motif stretch occupies residues 109 to 147 (ANLRGCLETLKMLVPCVSDATRNTTLALLTRARDHIIEL). Positions 144-185 (IIELQDSNAAQMKKLNDLRDEQDELVAELAQLQADEEVAQAT) form a coiled coil. Positions 189 to 213 (CQTLSQSRPESRASSFTSTSSRDSP) are disordered. The span at 200 to 212 (RASSFTSTSSRDS) shows a compositional bias: low complexity.

As to quaternary structure, forms heterodimer with mxl-1 in the presence and absence of DNA. Ubiquitinated. Expressed in intestinal cells in adults. Expressed in D-type motor neuron cell bodies.

It localises to the nucleus. In terms of biological role, transcriptional regulator which binds to the E box motif 5'-CACGTG-3', when in a heterodimeric complex with mxl-1. Involved in the control of lifespan in response to dietary restriction, the decline in protein homeostasis associated with normal aging, germline signaling and may overlap with the insulin-like signaling pathway. Plays a role in autophagy. Involved in promoting infection by the microsporidian pathogen N.parisii, possibly together with transcription factors pha-4 and zip-10. In response to neuronal injury, mdl-1 is targeted by sdz-33 for ubiquitin-mediated degradation, probably thereby reducing levels of mdl-1-mxl-1 heterodimers, allowing free mxl-1 to form complexes with tdpt-1 and thus inhibiting tdpt-1-dependent sumoylation of ets-4. In Caenorhabditis elegans, this protein is Mad-like protein 1.